Here is a 1412-residue protein sequence, read N- to C-terminus: DNA-directed RNA polymerase subunit beta' (1412 aa).

Cys-70, Cys-72, Cys-85, and Cys-88 together coordinate Zn(2+). Positions 460, 462, and 464 each coordinate Mg(2+). 4 residues coordinate Zn(2+): Cys-819, Cys-893, Cys-900, and Cys-903. A disordered region spans residues 1392-1412 (EEAFEFGTPSTPAEEPQHPAE).

It belongs to the RNA polymerase beta' chain family. As to quaternary structure, the RNAP catalytic core consists of 2 alpha, 1 beta, 1 beta' and 1 omega subunit. When a sigma factor is associated with the core the holoenzyme is formed, which can initiate transcription. It depends on Mg(2+) as a cofactor. Requires Zn(2+) as cofactor.

The catalysed reaction is RNA(n) + a ribonucleoside 5'-triphosphate = RNA(n+1) + diphosphate. Its function is as follows. DNA-dependent RNA polymerase catalyzes the transcription of DNA into RNA using the four ribonucleoside triphosphates as substrates. The polypeptide is DNA-directed RNA polymerase subunit beta' (Burkholderia thailandensis (strain ATCC 700388 / DSM 13276 / CCUG 48851 / CIP 106301 / E264)).